The chain runs to 233 residues: Nickel import system ATP-binding protein NikE (233 aa).

The region spanning 2–228 (IELKHVTFGY…DRHPYTKELV (227 aa)) is the ABC transporter domain. An ATP-binding site is contributed by 35 to 42 (GESGCGKS).

It belongs to the ABC transporter superfamily. In terms of assembly, the complex is composed of two ATP-binding proteins (NikD and NikE), two transmembrane proteins (NikB and NikC) and a solute-binding protein (NikA).

It localises to the cell membrane. The catalysed reaction is Ni(2+)(out) + ATP + H2O = Ni(2+)(in) + ADP + phosphate + H(+). In terms of biological role, part of the ABC transporter complex NikABCDE (Opp2) involved in nickel import. Probably responsible for energy coupling to the transport system. The sequence is that of Nickel import system ATP-binding protein NikE from Staphylococcus aureus (strain MRSA252).